The sequence spans 402 residues: MTGIIHSLLDTDLYKFTMLQVVLHQFPQTHSLYEFRCRNASTVYPLADIREDLEAELDALCQLRFTHDELGYLRSLRFIKSDFVDYLELFQLQRRFVEIGTDDKDRLNIRIEGPMIQAMFFEIFILAIVNELYFRRLETPAVIEEGERRLQAKAARLKEIAAAQNPDEPPFLISDFGTRRRYKLAWQEHVIRTLLEAAPGIVRGTSNVFLAKKLGITPIGTMAHEFLQAFQALDVRLRNFQKAALESWVHEYRGDLGVALTDVVGMDAFLRDFDLYFAKLFDGLRHDSGDPYVWGDKAYAHYQKLKIDSRTKMLTFSDGLDIERSWALHQYFKDRFKTGFGIGTNLTNDMGHTPLNIVLKLVECNGQSVAKLSDSPGKTMTNNSTFLAYLRQVFDVPEPETP.

Residue His-224 is modified to Phosphohistidine; by autocatalysis.

This sequence belongs to the NAPRTase family. Transiently phosphorylated on a His residue during the reaction cycle. Phosphorylation strongly increases the affinity for substrates and increases the rate of nicotinate D-ribonucleotide production. Dephosphorylation regenerates the low-affinity form of the enzyme, leading to product release.

It catalyses the reaction nicotinate + 5-phospho-alpha-D-ribose 1-diphosphate + ATP + H2O = nicotinate beta-D-ribonucleotide + ADP + phosphate + diphosphate. The protein operates within cofactor biosynthesis; NAD(+) biosynthesis; nicotinate D-ribonucleotide from nicotinate: step 1/1. Its function is as follows. Catalyzes the synthesis of beta-nicotinate D-ribonucleotide from nicotinate and 5-phospho-D-ribose 1-phosphate at the expense of ATP. The polypeptide is Nicotinate phosphoribosyltransferase (Neisseria meningitidis serogroup B (strain ATCC BAA-335 / MC58)).